Reading from the N-terminus, the 137-residue chain is Large ribosomal subunit protein uL16c (137 aa).

Belongs to the universal ribosomal protein uL16 family. In terms of assembly, part of the 50S ribosomal subunit.

It localises to the plastid. Its subcellular location is the chloroplast. This chain is Large ribosomal subunit protein uL16c, found in Thalassiosira pseudonana (Marine diatom).